The chain runs to 77 residues: Small ribosomal subunit protein uS17 (77 aa).

The protein belongs to the universal ribosomal protein uS17 family. In terms of assembly, part of the 30S ribosomal subunit.

One of the primary rRNA binding proteins, it binds specifically to the 5'-end of 16S ribosomal RNA. The sequence is that of Small ribosomal subunit protein uS17 from Rickettsia akari (strain Hartford).